A 197-amino-acid chain; its full sequence is Segregation and condensation protein B (197 aa).

This sequence belongs to the ScpB family. In terms of assembly, homodimer. Homodimerization may be required to stabilize the binding of ScpA to the Smc head domains. Component of a cohesin-like complex composed of ScpA, ScpB and the Smc homodimer, in which ScpA and ScpB bind to the head domain of Smc. The presence of the three proteins is required for the association of the complex with DNA.

It localises to the cytoplasm. Functionally, participates in chromosomal partition during cell division. May act via the formation of a condensin-like complex containing Smc and ScpA that pull DNA away from mid-cell into both cell halves. The polypeptide is Segregation and condensation protein B (Syntrophotalea carbinolica (strain DSM 2380 / NBRC 103641 / GraBd1) (Pelobacter carbinolicus)).